Here is a 617-residue protein sequence, read N- to C-terminus: Vacuolar protein sorting-associated protein 33B (617 aa).

Ala2 is subject to N-acetylalanine.

Belongs to the STXBP/unc-18/SEC1 family. Interacts with RAB11A and VIPAS39. Associates with adaptor protein complex 3 (AP-3), clathrin:AP-3 and clathrin:HGS complexes. Phosphorylated on tyrosine residues. As to expression, ubiquitous.

It is found in the late endosome membrane. Its subcellular location is the lysosome membrane. The protein resides in the early endosome. The protein localises to the cytoplasmic vesicle. It localises to the clathrin-coated vesicle. It is found in the recycling endosome. Functionally, may play a role in vesicle-mediated protein trafficking to lysosomal compartments and in membrane docking/fusion reactions of late endosomes/lysosomes. Mediates phagolysosomal fusion in macrophages. Proposed to be involved in endosomal maturation implicating VIPAS39. In epithelial cells, the VPS33B:VIPAS39 complex may play a role in the apical recycling pathway and in the maintenance of the apical-basolateral polarity. Seems to be involved in the sorting of specific cargos from the trans-Golgi network to alpha-granule-destined multivesicular bodies (MVBs) promoting MVBs maturation in megakaryocytes. The protein is Vacuolar protein sorting-associated protein 33B (Vps33b) of Rattus norvegicus (Rat).